A 259-amino-acid polypeptide reads, in one-letter code: Thiazole synthase (259 aa).

Residue Lys-95 is the Schiff-base intermediate with DXP of the active site. 1-deoxy-D-xylulose 5-phosphate-binding positions include Gly-156, 182–183 (AG), and 204–205 (AS).

Belongs to the ThiG family. In terms of assembly, homotetramer. Forms heterodimers with either ThiH or ThiS.

The protein localises to the cytoplasm. The catalysed reaction is [ThiS sulfur-carrier protein]-C-terminal-Gly-aminoethanethioate + 2-iminoacetate + 1-deoxy-D-xylulose 5-phosphate = [ThiS sulfur-carrier protein]-C-terminal Gly-Gly + 2-[(2R,5Z)-2-carboxy-4-methylthiazol-5(2H)-ylidene]ethyl phosphate + 2 H2O + H(+). The protein operates within cofactor biosynthesis; thiamine diphosphate biosynthesis. In terms of biological role, catalyzes the rearrangement of 1-deoxy-D-xylulose 5-phosphate (DXP) to produce the thiazole phosphate moiety of thiamine. Sulfur is provided by the thiocarboxylate moiety of the carrier protein ThiS. In vitro, sulfur can be provided by H(2)S. The sequence is that of Thiazole synthase from Corynebacterium aurimucosum (strain ATCC 700975 / DSM 44827 / CIP 107346 / CN-1) (Corynebacterium nigricans).